The sequence spans 93 residues: Protein S100-A5 (93 aa).

EF-hand domains lie at 12 to 47 (MVTTFHKYSGREGSKLTLSRKELKELIKTELSLAEK) and 48 to 83 (MKESSIDNLMKSLDKNSDQEIDFKEYSVFLTTLCMA). Ca(2+)-binding residues include threonine 28, glutamate 33, aspartate 61, asparagine 63, aspartate 65, glutamate 67, and glutamate 72.

The protein belongs to the S-100 family. Homodimer.

Binds calcium, zinc and copper. One subunit can simultaneously bind 2 calcium ions or 2 copper ions plus 1 zinc ion. Calcium and copper ions compete for the same binding sites. The protein is Protein S100-A5 (S100a5) of Mus musculus (Mouse).